The primary structure comprises 77 residues: Putative snRNP Sm-like protein (77 aa).

The 73-residue stretch at 4-76 (RPLDVLNRSL…VVFVSPAPGG (73 aa)) folds into the Sm domain.

It belongs to the snRNP Sm proteins family.

This Archaeoglobus fulgidus (strain ATCC 49558 / DSM 4304 / JCM 9628 / NBRC 100126 / VC-16) protein is Putative snRNP Sm-like protein.